We begin with the raw amino-acid sequence, 111 residues long: Class I hydrophobin 10 (111 aa).

The signal sequence occupies residues Met1 to Ala17. 4 disulfides stabilise this stretch: Cys30–Cys90, Cys37–Cys84, Cys38–Cys71, and Cys91–Cys104.

It belongs to the fungal hydrophobin family. As to quaternary structure, self-assembles to form functional amyloid fibrils called rodlets. Self-assembly into fibrillar rodlets occurs spontaneously at hydrophobic:hydrophilic interfaces and the rodlets further associate laterally to form amphipathic monolayers.

It localises to the secreted. The protein localises to the cell wall. Its function is as follows. Aerial growth, conidiation, and dispersal of filamentous fungi in the environment rely upon a capability of their secreting small amphipathic proteins called hydrophobins (HPBs) with low sequence identity. Class I can self-assemble into an outermost layer of rodlet bundles on aerial cell surfaces, conferring cellular hydrophobicity that supports fungal growth, development and dispersal; whereas Class II form highly ordered films at water-air interfaces through intermolecular interactions but contribute nothing to the rodlet structure. The protein is Class I hydrophobin 10 of Pleurotus ostreatus (strain PC15) (Oyster mushroom).